We begin with the raw amino-acid sequence, 365 residues long: Histidinol-phosphate aminotransferase (365 aa).

Residues 1–21 are disordered; sequence MSRPVPNPGILDIAPYTPGKS. An N6-(pyridoxal phosphate)lysine modification is found at K221.

Belongs to the class-II pyridoxal-phosphate-dependent aminotransferase family. Histidinol-phosphate aminotransferase subfamily. In terms of assembly, homodimer. Pyridoxal 5'-phosphate is required as a cofactor.

The catalysed reaction is L-histidinol phosphate + 2-oxoglutarate = 3-(imidazol-4-yl)-2-oxopropyl phosphate + L-glutamate. Its pathway is amino-acid biosynthesis; L-histidine biosynthesis; L-histidine from 5-phospho-alpha-D-ribose 1-diphosphate: step 7/9. In Rhodopseudomonas palustris (strain ATCC BAA-98 / CGA009), this protein is Histidinol-phosphate aminotransferase.